We begin with the raw amino-acid sequence, 96 residues long: Co-chaperonin GroES (96 aa).

The protein belongs to the GroES chaperonin family. As to quaternary structure, heptamer of 7 subunits arranged in a ring. Interacts with the chaperonin GroEL.

It localises to the cytoplasm. Functionally, together with the chaperonin GroEL, plays an essential role in assisting protein folding. The GroEL-GroES system forms a nano-cage that allows encapsulation of the non-native substrate proteins and provides a physical environment optimized to promote and accelerate protein folding. GroES binds to the apical surface of the GroEL ring, thereby capping the opening of the GroEL channel. The chain is Co-chaperonin GroES from Alteromonas mediterranea (strain DSM 17117 / CIP 110805 / LMG 28347 / Deep ecotype).